The primary structure comprises 357 residues: Cell division control protein 10 (357 aa).

The Septin-type G domain maps to 34–306; sequence RGFQFNIMVV…ETFRSKQLIA (273 aa). The segment at 44 to 51 is G1 motif; sequence GRSGLGKS. GTP contacts are provided by residues 44–51, Thr78, Gly104, 184–192, Gly240, and Arg255; these read GRSGLGKS and KSDSLTLDE. Residues 101-104 form a G3 motif region; the sequence is DTPG. The segment at 183–186 is G4 motif; it reads AKSD. A disordered region spans residues 310–357; it reads NASNPNRQSQLQKDQGQTSQQSNQDLKNTSGVPNAPMFQSTTGTAAAR.

This sequence belongs to the TRAFAC class TrmE-Era-EngA-EngB-Septin-like GTPase superfamily. Septin GTPase family.

It localises to the bud neck. Plays a role in the cell cycle. Involved in the formation of the ring of filaments in the neck region at the mother-bud junction during mitosis. The chain is Cell division control protein 10 (CDC10) from Candida albicans (strain SC5314 / ATCC MYA-2876) (Yeast).